A 579-amino-acid chain; its full sequence is ATP-dependent lipid A-core flippase (579 aa).

Transmembrane regions (helical) follow at residues F24–M44, L61–G81, L147–F167, and L253–A273. The 282-residue stretch at L25 to K306 folds into the ABC transmembrane type-1 domain. The region spanning V338–L573 is the ABC transporter domain. G372–S379 is an ATP binding site.

This sequence belongs to the ABC transporter superfamily. Lipid exporter (TC 3.A.1.106) family. Homodimer.

Its subcellular location is the cell inner membrane. The enzyme catalyses ATP + H2O + lipid A-core oligosaccharideSide 1 = ADP + phosphate + lipid A-core oligosaccharideSide 2.. Its function is as follows. Involved in lipopolysaccharide (LPS) biosynthesis. Translocates lipid A-core from the inner to the outer leaflet of the inner membrane. Transmembrane domains (TMD) form a pore in the inner membrane and the ATP-binding domain (NBD) is responsible for energy generation. This Chromohalobacter salexigens (strain ATCC BAA-138 / DSM 3043 / CIP 106854 / NCIMB 13768 / 1H11) protein is ATP-dependent lipid A-core flippase.